We begin with the raw amino-acid sequence, 495 residues long: Trimethylamine methyltransferase MttB (495 aa).

Position 334 (Pyl334) is a non-standard amino acid, pyrrolysine.

The protein belongs to the trimethylamine methyltransferase family.

The catalysed reaction is Co(I)-[trimethylamine-specific corrinoid protein] + trimethylamine + H(+) = methyl-Co(III)-[trimethylamine-specific corrinoid protein] + dimethylamine. The protein operates within one-carbon metabolism; methanogenesis from trimethylamine. Catalyzes the transfer of a methyl group from trimethylamine to the corrinoid cofactor of MttC. In Methanosarcina barkeri (strain Fusaro / DSM 804), this protein is Trimethylamine methyltransferase MttB (mttB).